A 529-amino-acid polypeptide reads, in one-letter code: MSTFPWLTTIILFPIVAALAIPFIPDPTGKGRPIRWYALAVGLIDFALIVYAFTNFYDLNTPGMQLWESYDWIPEIGLRWSVGADGLSMPLILLTGFITTLAILAAWPVTLKPRLFYFLMLAMYGGQIAVFAVQDMLVFFLAWELELIPVYLLLAIWGGHKRQYAATKFILYTAGSSLFILVAGLAMAFYGDTVSFDMQTLAAKDYALGFQLLVYAGFLVAYGVKLPIVPLHTWLPDAHGEATAPVHMLLAGILLKMGGYALIRMNVDMLPAAHAKFAPVLVILGVVNIIYAALTSYAQRNLKRKIAYSSISHIGFVLIGIASFTNLGMSGAVLQMVSHGLIGASLFFLVGATYDRTHTLILEEMGGVGQKMKKIFAMFTACSLASLALPGMSGFVAELMVFIGFATSDAYSLPFRVIVVFLAAVGVILTPIYLLSMLREIFYGPENKELVEHEALVDAEPREVFIIACLLVPIIGIGLYPKLLTQIYDATTGQVIARAREVLPTLAQQTEQPLGILPMVAPQLKANAQ.

Transmembrane regions (helical) follow at residues 4–24 (FPWL…IPFI), 36–56 (WYAL…FTNF), 91–111 (LILL…PVTL), 115–135 (LFYF…AVQD), 137–157 (LVFF…LAIW), 169–189 (FILY…AMAF), 209–229 (GFQL…LPIV), 243–263 (TAPV…YALI), 277–297 (FAPV…LTSY), 314–334 (IGFV…GAVL), 335–355 (QMVS…ATYD), 387–407 (LALP…GFAT), and 417–437 (VIVV…LLSM).

The protein belongs to the complex I subunit 4 family.

The protein resides in the cellular thylakoid membrane. It carries out the reaction a plastoquinone + NADH + (n+1) H(+)(in) = a plastoquinol + NAD(+) + n H(+)(out). It catalyses the reaction a plastoquinone + NADPH + (n+1) H(+)(in) = a plastoquinol + NADP(+) + n H(+)(out). NDH-1 shuttles electrons from NAD(P)H, via FMN and iron-sulfur (Fe-S) centers, to quinones in the respiratory chain. The immediate electron acceptor for the enzyme in this species is believed to be plastoquinone. Couples the redox reaction to proton translocation (for every two electrons transferred, four hydrogen ions are translocated across the cytoplasmic membrane), and thus conserves the redox energy in a proton gradient. The sequence is that of NAD(P)H-quinone oxidoreductase chain 4 1 from Thermosynechococcus vestitus (strain NIES-2133 / IAM M-273 / BP-1).